Here is a 134-residue protein sequence, read N- to C-terminus: Large ribosomal subunit protein uL16c (134 aa).

Belongs to the universal ribosomal protein uL16 family. In terms of assembly, part of the 50S ribosomal subunit.

It localises to the plastid. It is found in the chloroplast. In Oltmannsiellopsis viridis (Marine flagellate), this protein is Large ribosomal subunit protein uL16c.